The primary structure comprises 76 residues: Protein RALF-like 26 (76 aa).

The N-terminal stretch at 1–22 is a signal peptide; it reads MKAWMIILLVICVAVVVEQSEA. Cysteine 37 and cysteine 46 form a disulfide bridge. Asparagine 61 is a glycosylation site (N-linked (GlcNAc...) asparagine). Cysteine 66 and cysteine 72 are disulfide-bonded.

It belongs to the plant rapid alkalinization factor (RALF) family.

The protein resides in the secreted. Cell signaling peptide that may regulate plant stress, growth, and development. Mediates a rapid alkalinization of extracellular space by mediating a transient increase in the cytoplasmic Ca(2+) concentration leading to a calcium-dependent signaling events through a cell surface receptor and a concomitant activation of some intracellular mitogen-activated protein kinases. The protein is Protein RALF-like 26 (RALFL26) of Arabidopsis thaliana (Mouse-ear cress).